The sequence spans 245 residues: tRNA1(Val) (adenine(37)-N6)-methyltransferase (245 aa).

This sequence belongs to the methyltransferase superfamily. tRNA (adenine-N(6)-)-methyltransferase family.

It localises to the cytoplasm. It carries out the reaction adenosine(37) in tRNA1(Val) + S-adenosyl-L-methionine = N(6)-methyladenosine(37) in tRNA1(Val) + S-adenosyl-L-homocysteine + H(+). Its function is as follows. Specifically methylates the adenine in position 37 of tRNA(1)(Val) (anticodon cmo5UAC). The chain is tRNA1(Val) (adenine(37)-N6)-methyltransferase from Cronobacter sakazakii (strain ATCC BAA-894) (Enterobacter sakazakii).